A 25-amino-acid chain; its full sequence is Toxin Tpa3 (25 aa).

It belongs to the non-disulfide-bridged peptide (NDBP) superfamily. Expressed by the venom gland.

Its subcellular location is the secreted. Its function is as follows. Unknown. Is not toxic to mammals. The polypeptide is Toxin Tpa3 (Tityus pachyurus (Colombian scorpion)).